A 369-amino-acid polypeptide reads, in one-letter code: 4-hydroxy-3-methylbut-2-en-1-yl diphosphate synthase (flavodoxin) (369 aa).

[4Fe-4S] cluster-binding residues include cysteine 270, cysteine 273, cysteine 305, and glutamate 312.

This sequence belongs to the IspG family. [4Fe-4S] cluster serves as cofactor.

It carries out the reaction (2E)-4-hydroxy-3-methylbut-2-enyl diphosphate + oxidized [flavodoxin] + H2O + 2 H(+) = 2-C-methyl-D-erythritol 2,4-cyclic diphosphate + reduced [flavodoxin]. It functions in the pathway isoprenoid biosynthesis; isopentenyl diphosphate biosynthesis via DXP pathway; isopentenyl diphosphate from 1-deoxy-D-xylulose 5-phosphate: step 5/6. Its function is as follows. Converts 2C-methyl-D-erythritol 2,4-cyclodiphosphate (ME-2,4cPP) into 1-hydroxy-2-methyl-2-(E)-butenyl 4-diphosphate. The polypeptide is 4-hydroxy-3-methylbut-2-en-1-yl diphosphate synthase (flavodoxin) (Pseudomonas putida (strain GB-1)).